The sequence spans 364 residues: D-alanine--D-alanine ligase A (364 aa).

An ATP-grasp domain is found at 145-348; sequence KRLLRDAGLN…YTDLISRLIE (204 aa). Position 175–230 (175–230) interacts with ATP; the sequence is ESRLGLPLFVKPANQGSSVGVSKVANEAQYQQAVALAFEFDHKVVVEQGIKGREIE. 3 residues coordinate Mg(2+): aspartate 302, glutamate 315, and asparagine 317.

The protein belongs to the D-alanine--D-alanine ligase family. Mg(2+) is required as a cofactor. The cofactor is Mn(2+).

Its subcellular location is the cytoplasm. The catalysed reaction is 2 D-alanine + ATP = D-alanyl-D-alanine + ADP + phosphate + H(+). It participates in cell wall biogenesis; peptidoglycan biosynthesis. Its function is as follows. Cell wall formation. The polypeptide is D-alanine--D-alanine ligase A (ddlA) (Salmonella typhi).